Consider the following 320-residue polypeptide: MHAIFSSFSRKVVVNVGASSQSQLTKMVKKKPNQSRHLLPSRLSSPSSVPHFVPSAVSRSAKVHGFFASKLGNTNLKLKFGNVMESRAGFFSSELPSHGFESGGFTGFQKRGWKSWINGANGVVFGLVIANAAVFTMWRVSDRSWMLSTYSFTSGYIHTLITSGFSHIGTSQIILNMIGISYFGSRIARTLGPLYLLKLYFAGALGGSVCFLSYHALLATLKGEGVVIKDHQSTAPISQLLGADGSMFAIALLDMFIYPKVTTYFALMLRVHVMFRIINLGVEILNIPEGGPNHIASSSGQLGGVVVAAMAWARIKKGRF.

A chloroplast-targeting transit peptide spans 1-87 (MHAIFSSFSR…LKFGNVMESR (87 aa)). Helical transmembrane passes span 116–136 (WING…AVFT), 160–180 (LITS…MIGI), 199–219 (LYFA…ALLA), 247–267 (MFAI…YFAL), and 295–315 (IASS…WARI).

This sequence belongs to the peptidase S54 family.

The protein resides in the plastid. The protein localises to the chloroplast membrane. In terms of biological role, probable rhomboid-type serine protease that catalyzes intramembrane proteolysis. This Arabidopsis thaliana (Mouse-ear cress) protein is Rhomboid-like protein 17, chloroplastic.